Here is a 1350-residue protein sequence, read N- to C-terminus: Ubiquitin carboxyl-terminal hydrolase 47 (1350 aa).

A disordered region spans residues 111–138 (DGEQPQLTSDESGTADSSGLDDSSQEKF). A compositionally biased stretch (polar residues) spans 115-132 (PQLTSDESGTADSSGLDD). In terms of domain architecture, USP spans 173–548 (VGLVNQAMTC…NAYMLMYRLK (376 aa)). Cysteine 182 serves as the catalytic Nucleophile. Residues 409–437 (EDEKSPQTDSCTDSGAENEGSCHSDQMSN) form a disordered region. The span at 415–437 (QTDSCTDSGAENEGSCHSDQMSN) shows a compositional bias: polar residues. Histidine 487 serves as the catalytic Proton acceptor. Disordered stretches follow at residues 815 to 836 (HPRP…PQED) and 859 to 1000 (SLQQ…ESGK). The span at 859–877 (SLQQHQDGGNGDSSKSTEG) shows a compositional bias: polar residues. A compositionally biased stretch (basic and acidic residues) spans 916 to 926 (PEERSDSDVNN). The segment covering 929-945 (STSSVDSDILSSSHSSD) has biased composition (low complexity). Positions 973 to 982 (KANDGKKETW) are enriched in basic and acidic residues. Over residues 983–996 (DTAEEDSGTDSEYD) the composition is skewed to acidic residues.

The protein belongs to the peptidase C19 family. USP47 subfamily.

The protein resides in the cytoplasm. It catalyses the reaction Thiol-dependent hydrolysis of ester, thioester, amide, peptide and isopeptide bonds formed by the C-terminal Gly of ubiquitin (a 76-residue protein attached to proteins as an intracellular targeting signal).. Ubiquitin-specific protease that specifically deubiquitinates monoubiquitinated DNA polymerase beta (polb), stabilizing polb thereby playing a role in base-excision repair (BER). This Xenopus laevis (African clawed frog) protein is Ubiquitin carboxyl-terminal hydrolase 47 (usp47).